We begin with the raw amino-acid sequence, 116 residues long: Large ribosomal subunit protein bL20 (116 aa).

This sequence belongs to the bacterial ribosomal protein bL20 family.

Functionally, binds directly to 23S ribosomal RNA and is necessary for the in vitro assembly process of the 50S ribosomal subunit. It is not involved in the protein synthesizing functions of that subunit. The chain is Large ribosomal subunit protein bL20 from Mycoplasmopsis agalactiae (strain NCTC 10123 / CIP 59.7 / PG2) (Mycoplasma agalactiae).